The following is a 329-amino-acid chain: Putative GTPase Obg (329 aa).

The Obg domain maps to 1-159 (MQFIDQARIM…WPLQLELKLL (159 aa)). The 169-residue stretch at 160–328 (AEVGIIGLPN…LKTQIWQQLG (169 aa)) folds into the OBG-type G domain. Residues 166–173 (GLPNAGKS), 191–195 (FTTLI), 213–216 (DIPG), 280–283 (SKIE), and 309–311 (SSA) each bind GTP. Residues serine 173 and threonine 193 each coordinate Mg(2+).

The protein belongs to the TRAFAC class OBG-HflX-like GTPase superfamily. OBG GTPase family. Monomer. Requires Mg(2+) as cofactor.

It localises to the plastid. The protein localises to the organellar chromatophore. An essential GTPase which binds GTP, GDP and possibly (p)ppGpp with moderate affinity, with high nucleotide exchange rates and a fairly low GTP hydrolysis rate. In Paulinella chromatophora, this protein is Putative GTPase Obg.